The sequence spans 138 residues: Large ribosomal subunit protein uL14 (138 aa).

It belongs to the universal ribosomal protein uL14 family. As to quaternary structure, part of the 50S ribosomal subunit. Forms a cluster with proteins L3 and L24e, part of which may contact the 16S rRNA in 2 intersubunit bridges.

Functionally, binds to 23S rRNA. Forms part of two intersubunit bridges in the 70S ribosome. This Sulfurisphaera tokodaii (strain DSM 16993 / JCM 10545 / NBRC 100140 / 7) (Sulfolobus tokodaii) protein is Large ribosomal subunit protein uL14.